A 520-amino-acid chain; its full sequence is Cyclin-L2 (520 aa).

N-acetylalanine is present on Ala2. 2 cyclin-like regions span residues Glu83–Lys185 and Lys198–Gln282. A disordered region spans residues Leu316–Arg520. A phosphoserine mark is found at Ser330, Ser338, Ser348, and Ser351. Over residues Arg357–Ala367 the composition is skewed to basic and acidic residues. Ser369 is modified (phosphoserine). Over residues Lys376–Ser390 the composition is skewed to basic and acidic residues. The segment at Arg385–Ser423 is RS. Residues Ser408–Ala436 are compositionally biased toward low complexity. The span at Ser441 to Tyr454 shows a compositional bias: basic and acidic residues. Residues Gln456 to Ser471 are compositionally biased toward basic residues. 2 stretches are compositionally biased toward basic and acidic residues: residues Arg472–Gly481 and Tyr489–Gly514.

The protein belongs to the cyclin family. Cyclin L subfamily. Interacts with CDK11A, CDK11B, CDK12, CDK13 and POLR2A, the hyperphosphorylated C-terminal domain (CTD) of RNA polymerase II. May form a ternary complex with CDK11B and casein kinase II (CKII). Interacts with pre-mRNA-splicing factors, including at least SRSF1, SRSF2 AND SRSF7/SLU7. In terms of tissue distribution, widely expressed.

The protein resides in the nucleus speckle. The protein localises to the nucleus. It is found in the nucleoplasm. Functionally, involved in pre-mRNA splicing. May induce cell death, possibly by acting on the transcription and RNA processing of apoptosis-related factors. The chain is Cyclin-L2 (CCNL2) from Homo sapiens (Human).